A 128-amino-acid polypeptide reads, in one-letter code: Arsenic resistance transcriptional regulator ArsR1 (128 aa).

The HTH arsR-type domain maps to 11–103 (MREILTPPIV…AMLKGVVDAN (93 aa)). Arsenite-binding residues include Cys43 and Cys45. Residues 44 to 67 (VCELTHALELSQPKISRHLAQLRE) constitute a DNA-binding region (H-T-H motif).

As to quaternary structure, homodimer.

The protein resides in the cytoplasm. Functionally, binds arsenite and regulates the expression of arsenic efflux pumps. In vitro, also binds antimony and bismuth, but not arsenate. This Pseudomonas putida (strain ATCC 47054 / DSM 6125 / CFBP 8728 / NCIMB 11950 / KT2440) protein is Arsenic resistance transcriptional regulator ArsR1.